We begin with the raw amino-acid sequence, 191 residues long: Signal peptidase IB (191 aa).

Over 1–7 (MKKELLE) the chain is Cytoplasmic. A helical membrane pass occupies residues 8–28 (WIISIAVAFVILFIVGKFIVT). Topologically, residues 29 to 191 (PYTIKGESMD…YNFNPENTKN (163 aa)) are extracellular. Active-site residues include serine 36 and lysine 77.

The protein belongs to the peptidase S26 family.

It localises to the cell membrane. The enzyme catalyses Cleavage of hydrophobic, N-terminal signal or leader sequences from secreted and periplasmic proteins.. Functionally, essential for cell viability. This chain is Signal peptidase IB (spsB), found in Staphylococcus aureus (strain MRSA252).